The primary structure comprises 124 residues: Membrane-anchored ubiquitin-fold protein 2 (124 aa).

A Ubiquitin-like domain is found at 8-74 (LEIKFRLNDG…LENNKTVGDC (67 aa)). 4 S-palmitoyl cysteine lipidation sites follow: C115, C117, C119, and C124.

Post-translationally, acylated protein. Probably modified with palmitate. Ubiquitous, but three fold higher expression in stamens.

The protein resides in the cell membrane. Functionally, may serve as docking site to facilitate the association of other proteins to the plasma membrane. The sequence is that of Membrane-anchored ubiquitin-fold protein 2 (MUB2) from Arabidopsis thaliana (Mouse-ear cress).